Reading from the N-terminus, the 388-residue chain is 4-hydroxy-3-methylbut-2-en-1-yl diphosphate synthase (flavodoxin) (388 aa).

Positions 281, 284, 316, and 323 each coordinate [4Fe-4S] cluster.

Belongs to the IspG family. Requires [4Fe-4S] cluster as cofactor.

It carries out the reaction (2E)-4-hydroxy-3-methylbut-2-enyl diphosphate + oxidized [flavodoxin] + H2O + 2 H(+) = 2-C-methyl-D-erythritol 2,4-cyclic diphosphate + reduced [flavodoxin]. Its pathway is isoprenoid biosynthesis; isopentenyl diphosphate biosynthesis via DXP pathway; isopentenyl diphosphate from 1-deoxy-D-xylulose 5-phosphate: step 5/6. In terms of biological role, converts 2C-methyl-D-erythritol 2,4-cyclodiphosphate (ME-2,4cPP) into 1-hydroxy-2-methyl-2-(E)-butenyl 4-diphosphate. This Pseudarthrobacter chlorophenolicus (strain ATCC 700700 / DSM 12829 / CIP 107037 / JCM 12360 / KCTC 9906 / NCIMB 13794 / A6) (Arthrobacter chlorophenolicus) protein is 4-hydroxy-3-methylbut-2-en-1-yl diphosphate synthase (flavodoxin).